A 339-amino-acid chain; its full sequence is HTH-type transcriptional regulator SyrM 2 (339 aa).

Positions 32–89 (VDLNLLVELEALLQYRNITHAAQHVGRSQPAMSRALSRLRDMFNDDLLVRGSSGLVPT) constitute an HTH lysR-type domain. Residues 49-68 (ITHAAQHVGRSQPAMSRALS) constitute a DNA-binding region (H-T-H motif).

It belongs to the LysR transcriptional regulatory family.

Acts in trans to stimulate nod gene expression. This is HTH-type transcriptional regulator SyrM 2 (syrM2) from Sinorhizobium fredii (strain NBRC 101917 / NGR234).